The chain runs to 353 residues: Quinolinate synthase (353 aa).

2 residues coordinate iminosuccinate: H47 and S68. Residue C113 coordinates [4Fe-4S] cluster. Iminosuccinate contacts are provided by residues 139–141 and S156; that span reads YAN. A [4Fe-4S] cluster-binding site is contributed by C200. Residues 226–228 and T243 contribute to the iminosuccinate site; that span reads HPE. C297 contacts [4Fe-4S] cluster.

The protein belongs to the quinolinate synthase family. Type 1 subfamily. The cofactor is [4Fe-4S] cluster.

It is found in the cytoplasm. It carries out the reaction iminosuccinate + dihydroxyacetone phosphate = quinolinate + phosphate + 2 H2O + H(+). It functions in the pathway cofactor biosynthesis; NAD(+) biosynthesis; quinolinate from iminoaspartate: step 1/1. Catalyzes the condensation of iminoaspartate with dihydroxyacetone phosphate to form quinolinate. In Vibrio vulnificus (strain CMCP6), this protein is Quinolinate synthase.